Here is a 182-residue protein sequence, read N- to C-terminus: Helofensin-3 (182 aa).

Positions 1-26 (MQMDWLFIAVISGIGLLSSGVPGTQG) are cleaved as a signal peptide. One copy of the C(6)C(4)C(9)C(6)CC 1; approximate repeat lies at 27–64 (AYTTEQCRALNGSCNFYACFPKNVIIGKCDWWGWSCCA). A C(6)C(4)C(9)C(6)CC 2; approximate repeat occupies 65 to 101 (RTPLERCTAKKGTCTKTGCTKTDTDHGPCDGGAQCCQ). The C(6)C(4)C(9)C(6)CC 3; approximate repeat unit spans residues 102–138 (RDPVKYCKFHGNVCGRGKCPMDHIPIGECTPGYPCCK). Residues 139–176 (RDGPAYCKSKGGKCLNRCPQIVPTNVIGVCATGVPCCK) form a C(6)C(4)C(9)C(6)CC 4; approximate repeat.

This sequence belongs to the beta-defensin family. Helofensin subfamily. Expressed by the mandibular venom gland.

It is found in the secreted. Lethal toxin which possesses an inhibitory effect on direct electrical stimulation of the isolated hemi-diaphragm of mice. Neither hemorrhagic nor hemolytic activities are detected. Phospholipase A2 activity, proteolytic activity and arginine esterolytic activity are absent. This chain is Helofensin-3, found in Heloderma suspectum cinctum (Banded Gila monster).